The primary structure comprises 205 residues: Small ribosomal subunit protein uS4 (205 aa).

The disordered stretch occupies residues 1–44; that stretch reads MSKRHSQKYKIDRRMGENLWGRPKSPVNSRSYGPGQHGQRRKTK. In terms of domain architecture, S4 RNA-binding spans 94 to 173; the sequence is SRLDAIVYRC…LPEYIDLDAK (80 aa).

Belongs to the universal ribosomal protein uS4 family. As to quaternary structure, part of the 30S ribosomal subunit. Contacts protein S5. The interaction surface between S4 and S5 is involved in control of translational fidelity.

Its function is as follows. One of the primary rRNA binding proteins, it binds directly to 16S rRNA where it nucleates assembly of the body of the 30S subunit. In terms of biological role, with S5 and S12 plays an important role in translational accuracy. The polypeptide is Small ribosomal subunit protein uS4 (Maricaulis maris (strain MCS10) (Caulobacter maris)).